The chain runs to 137 residues: Large ribosomal subunit protein uL16c (137 aa).

Belongs to the universal ribosomal protein uL16 family. As to quaternary structure, part of the 50S ribosomal subunit.

It is found in the plastid. The protein resides in the chloroplast. The polypeptide is Large ribosomal subunit protein uL16c (Rhodomonas salina (Cryptomonas salina)).